Here is a 379-residue protein sequence, read N- to C-terminus: Neutral protease 2 homolog TRV_03208 (379 aa).

Positions 1-19 (MKFFTALAAVGALLAPALA) are cleaved as a signal peptide. The propeptide occupies 20–187 (LPTPASEEAS…DYFSKSLDKR (168 aa)). 2 cysteine pairs are disulfide-bonded: Cys-193/Cys-263 and Cys-270/Cys-288. Asn-221 carries an N-linked (GlcNAc...) asparagine glycan. His-312 contacts Zn(2+). Glu-313 is an active-site residue. Zn(2+) contacts are provided by His-316 and Asp-327.

It belongs to the peptidase M35 family. Zn(2+) serves as cofactor.

It localises to the secreted. It carries out the reaction Preferential cleavage of bonds with hydrophobic residues in P1'. Also 3-Asn-|-Gln-4 and 8-Gly-|-Ser-9 bonds in insulin B chain.. Functionally, secreted metalloproteinase that allows assimilation of proteinaceous substrates. Shows high activities on basic nuclear substrates such as histone and protamine. May be involved in virulence. This is Neutral protease 2 homolog TRV_03208 from Trichophyton verrucosum (strain HKI 0517).